We begin with the raw amino-acid sequence, 274 residues long: DNA-directed RNA polymerase subunit Rpo3 (274 aa).

Residues Cys-202, Cys-205, and Cys-208 each contribute to the [3Fe-4S] cluster site.

The protein belongs to the archaeal Rpo3/eukaryotic RPB3 RNA polymerase subunit family. In terms of assembly, part of the RNA polymerase complex. It depends on [3Fe-4S] cluster as a cofactor.

The protein localises to the cytoplasm. The enzyme catalyses RNA(n) + a ribonucleoside 5'-triphosphate = RNA(n+1) + diphosphate. Its function is as follows. DNA-dependent RNA polymerase (RNAP) catalyzes the transcription of DNA into RNA using the four ribonucleoside triphosphates as substrates. This Methanobrevibacter smithii (strain ATCC 35061 / DSM 861 / OCM 144 / PS) protein is DNA-directed RNA polymerase subunit Rpo3.